Reading from the N-terminus, the 70-residue chain is MKVYCLLLVLLVGLVSQAHGQLDKKCQMVCTFDYRPVCGSDGRTYPNKCTLTSTACMSQRSITVFHDGEC.

An N-terminal signal peptide occupies residues 1 to 20 (MKVYCLLLVLLVGLVSQAHG). In terms of domain architecture, Kazal-like spans 21–70 (QLDKKCQMVCTFDYRPVCGSDGRTYPNKCTLTSTACMSQRSITVFHDGEC). Cystine bridges form between C26–C56, C30–C49, and C38–C70.

This sequence belongs to the conopeptide P-like superfamily. As to expression, expressed by the venom duct.

The protein localises to the secreted. Functionally, acts as a neurotoxin by inhibiting an ion channel. May also act as a serine protease inhibitor, since it possess the kazal serine protease inhibitor signature. This Gemmula speciosa (Splendid gem-turris) protein is Turripeptide Gsp9.3.